We begin with the raw amino-acid sequence, 325 residues long: Beta-1,3-galactosyltransferase brn (325 aa).

At 1 to 7 the chain is on the cytoplasmic side; it reads MQSKHRK. Residues 8 to 28 form a helical; Signal-anchor for type II membrane protein membrane-spanning segment; that stretch reads LLLRCLLVLPLILLVDYCGLL. Residues 29-325 are Lumenal-facing; it reads THLHELNFER…WNECRSANYA (297 aa). Residues Asn149 and Asn166 are each glycosylated (N-linked (GlcNAc...) asparagine).

Belongs to the glycosyltransferase 31 family.

It is found in the golgi apparatus membrane. The enzyme catalyses a ganglioside GM2 (d18:1(4E)) + UDP-alpha-D-galactose = a ganglioside GM1 (d18:1(4E)) + UDP + H(+). Its function is as follows. Neurogenic protein essential for the development and maintenance of epithelial structure. Required in the germline for establishing the follicular epithelium and for determining the dorsal-ventral polarity. Collaborates with Notch on the apical surface of follicle cells to mediate germline-follicle cell adhesion. Brn has a role in chorion formation. The protein is Beta-1,3-galactosyltransferase brn (brn) of Drosophila melanogaster (Fruit fly).